The sequence spans 67 residues: Protein AaeX (67 aa).

The next 2 membrane-spanning stretches (helical) occupy residues 9 to 29 (IFGL…ALFF) and 47 to 67 (PALF…CLFV).

The protein belongs to the AaeX family.

The protein localises to the cell membrane. This is Protein AaeX from Serratia marcescens.